Consider the following 199-residue polypeptide: MKIGVIAIQGAVSEHVDALRRALAERGVEAEVVEIKHKGIVPECSGIVIPGGESTTLCRLLAREGIGEEIKEAAARGVPVLGTCAGLIVLAKEGDRQVEKTGQELLGIMDTRVNRNAFGRQRDSFEAELDVVILDSPFTGVFIRAPGIISCGPGVRVLSRLEDMIIAAEQGNVLALAFHPELTDDLRIHQYFLNKVLSC.

L-glutamine is bound at residue 52–54 (GES). Cys84 (nucleophile) is an active-site residue. L-glutamine is bound by residues Arg115 and 143–144 (IR). Catalysis depends on charge relay system residues His179 and Glu181.

The protein belongs to the glutaminase PdxT/SNO family. In the presence of PdxS, forms a dodecamer of heterodimers. Only shows activity in the heterodimer.

It catalyses the reaction aldehydo-D-ribose 5-phosphate + D-glyceraldehyde 3-phosphate + L-glutamine = pyridoxal 5'-phosphate + L-glutamate + phosphate + 3 H2O + H(+). The enzyme catalyses L-glutamine + H2O = L-glutamate + NH4(+). Its pathway is cofactor biosynthesis; pyridoxal 5'-phosphate biosynthesis. Functionally, catalyzes the hydrolysis of glutamine to glutamate and ammonia as part of the biosynthesis of pyridoxal 5'-phosphate. The resulting ammonia molecule is channeled to the active site of PdxS. The chain is Pyridoxal 5'-phosphate synthase subunit PdxT from Methanosarcina acetivorans (strain ATCC 35395 / DSM 2834 / JCM 12185 / C2A).